The primary structure comprises 617 residues: Secretogranin-2 (617 aa).

An N-terminal signal peptide occupies residues 1–30 (MAGAKAYRLGAVLLLIHLIFLISGAEAASF). Tyrosine 153 is modified (sulfotyrosine). Phosphoserine occurs at positions 176 and 270. Basic and acidic residues-rich tracts occupy residues 261-286 (TQTQ…EMKR) and 295-307 (EENR…QLSE). The disordered stretch occupies residues 261-307 (TQTQEEVRDSKENTEKNEQINEEMKRSGQLGLPDEENRRESKDQLSE). 4 positions are modified to phosphoserine: serine 434, serine 532, serine 555, and serine 556.

The protein belongs to the chromogranin/secretogranin protein family. Interacts with Secretogranin III/SCG3.

It localises to the secreted. Neuroendocrine protein of the granin family that regulates the biogenesis of secretory granules. The sequence is that of Secretogranin-2 (Scg2) from Mus musculus (Mouse).